We begin with the raw amino-acid sequence, 657 residues long: MSAAQAALIPDAAVPNGGASVVSAAEPSTSTSPEPIDISSLEQRTLNPDSFLYSELARSHLGERASTVLSVLVNKGRLSTREIHSFIPELSLSSIKTVLVSLIQLRCVQYLEETSLSGRKTLYYYFNEEGLFLMLYAGDISDRIVQYFNQDEEQHLVNIAQQIIHNVLALGSLTVKDYLASESNSNDTDIFNIHQAFVRLADLEFLVPLQGIHYTPIVDLWNMLYLREYKKLPKNTTQSDLKKRNEAKAKAKLEFNRIVSSPSQDSNGKIFLTDSGTGFKKVNESVSLTFNLERYLKSRRSNQLVQFAKSRIGTTSSKIYAVALSMTEQHSNGLSHPLSKTGLFQDLDERTSLEEDLKLDEENVKGVSFTALDVARRLPSNLDLRGTLVHSNQSLKRKQKHNQSPPQFEKRIKTEDGFVVPPLPTVMEESEEENEEGDANLDLDEDDSDPRSVSLVNGHLRLLLTANIPFIKESKPGQFFVPYSSLIPILKSSTYDSIIASTLGPSSHRVLRCIRDNGLCTERTITTTSLMREKDVRTVIGTLVKYNAIEIQEVPRTVDRAASRAVFLFRIKEKHAFNTMKLNLTWNLARLISKLETLKEENATLLKKANRDDVKGREMELLLASEINQLKVVNDRELNGLVRRHRLLSLWEVFKLF.

The disordered stretch occupies residues 390 to 450 (HSNQSLKRKQ…LDLDEDDSDP (61 aa)). Residues 428-448 (EESEEENEEGDANLDLDEDDS) show a composition bias toward acidic residues. Residues 584 to 605 (LTWNLARLISKLETLKEENATL) are leucine-zipper.

This sequence belongs to the RNA polymerase beta chain family. As to quaternary structure, component of the RNA polymerase III (Pol III) complex consisting of 17 subunits.

Its subcellular location is the nucleus. DNA-dependent RNA polymerase catalyzes the transcription of DNA into RNA using the four ribonucleoside triphosphates as substrates. Specific core component of RNA polymerase III which synthesizes small RNAs, such as 5S rRNA and tRNAs. The polypeptide is DNA-directed RNA polymerase III subunit RPC3 (RPC82) (Kluyveromyces lactis (strain ATCC 8585 / CBS 2359 / DSM 70799 / NBRC 1267 / NRRL Y-1140 / WM37) (Yeast)).